A 487-amino-acid chain; its full sequence is ATP synthase subunit beta (487 aa).

171–178 lines the ATP pocket; it reads GGAGVGKT.

This sequence belongs to the ATPase alpha/beta chains family. F-type ATPases have 2 components, CF(1) - the catalytic core - and CF(0) - the membrane proton channel. CF(1) has five subunits: alpha(3), beta(3), gamma(1), delta(1), epsilon(1). CF(0) has three main subunits: a(1), b(2) and c(9-12). The alpha and beta chains form an alternating ring which encloses part of the gamma chain. CF(1) is attached to CF(0) by a central stalk formed by the gamma and epsilon chains, while a peripheral stalk is formed by the delta and b chains.

The protein resides in the cell membrane. It catalyses the reaction ATP + H2O + 4 H(+)(in) = ADP + phosphate + 5 H(+)(out). In terms of biological role, produces ATP from ADP in the presence of a proton gradient across the membrane. The catalytic sites are hosted primarily by the beta subunits. The polypeptide is ATP synthase subunit beta (Leifsonia xyli subsp. xyli (strain CTCB07)).